Consider the following 185-residue polypeptide: uncharacterized protein (185 aa).

A disordered region spans residues 160–185 (QYTGPAVPSVPTTNLNDIGDPTKTVQ).

This is an uncharacterized protein from Saccharomyces cerevisiae (strain ATCC 204508 / S288c) (Baker's yeast).